The primary structure comprises 504 residues: Apoptosis inhibitor 5 (504 aa).

Positions 1–360 are ARM-like and Heat-like helical repeats; sequence MPTVEELYRN…HQLGRKLPDF (360 aa). At Lys251 the chain carries N6-acetyllysine. The tract at residues 370-391 is leucine-zipper; it reads LKDFKIRLQYFARGLQVYIRQL. Thr399 is subject to Phosphothreonine. The segment at 452–504 is disordered; that stretch reads GQKRASEDTTSGSPPKKSSAGPKRDARQIYNPPSGKYSSNLGNFNYERSLQGK. The Nuclear localization signal signature appears at 454-475; that stretch reads KRASEDTTSGSPPKKSSAGPKR. Ser462, Ser464, and Ser469 each carry phosphoserine. Over residues 462 to 472 the composition is skewed to low complexity; it reads SGSPPKKSSAG. Over residues 487 to 504 the composition is skewed to polar residues; it reads KYSSNLGNFNYERSLQGK.

The protein belongs to the API5 family. In terms of assembly, monomer. Interacts with FGF2 and ACIN1. Acetylation at Lys-251 impairs antiapoptotic function.

The protein localises to the nucleus. It is found in the cytoplasm. Antiapoptotic factor that may have a role in protein assembly. Negatively regulates ACIN1. By binding to ACIN1, it suppresses ACIN1 cleavage from CASP3 and ACIN1-mediated DNA fragmentation. Also known to efficiently suppress E2F1-induced apoptosis. The chain is Apoptosis inhibitor 5 (API5) from Pongo abelii (Sumatran orangutan).